We begin with the raw amino-acid sequence, 334 residues long: Endochitinase 3 (334 aa).

Positions 1 to 23 (MRLLEFTALSSLLVLFLLLAVSA) are cleaved as a signal peptide. Residues 24–65 (EQCGKQAGGARCPSGMCCSNFGWCGNTQDYCGPGKCQSQCPS) enclose the Chitin-binding type-1 domain. 4 disulfides stabilise this stretch: Cys26–Cys41, Cys35–Cys47, Cys40–Cys54, and Cys59–Cys63. The tract at residues 64–84 (PSGPGPTPRPPTPTPGPSTGD) is disordered. A compositionally biased stretch (pro residues) spans 66-79 (GPGPTPRPPTPTPG). 3 positions are modified to 4-hydroxyproline: Pro73, Pro74, and Pro76. 3 disulfide bridges follow: Cys106–Cys168, Cys180–Cys188, and Cys287–Cys319. Glu150 serves as the catalytic Proton donor. Residues 328–334 (GLLLETM) constitute a propeptide, removed in mature form.

The protein belongs to the glycosyl hydrolase 19 family. Chitinase class I subfamily. The 4-hydroxyproline residues are not glycosylated in this plant vacuolar protein.

The protein localises to the vacuole. It carries out the reaction Random endo-hydrolysis of N-acetyl-beta-D-glucosaminide (1-&gt;4)-beta-linkages in chitin and chitodextrins.. In terms of biological role, defense against chitin-containing fungal pathogens. This chain is Endochitinase 3 (CHN14), found in Nicotiana tabacum (Common tobacco).